The chain runs to 138 residues: ATP synthase epsilon chain (138 aa).

This sequence belongs to the ATPase epsilon chain family. In terms of assembly, F-type ATPases have 2 components, CF(1) - the catalytic core - and CF(0) - the membrane proton channel. CF(1) has five subunits: alpha(3), beta(3), gamma(1), delta(1), epsilon(1). CF(0) has three main subunits: a, b and c.

It is found in the cell membrane. Its function is as follows. Produces ATP from ADP in the presence of a proton gradient across the membrane. The sequence is that of ATP synthase epsilon chain from Streptococcus equi subsp. equi (strain 4047).